Here is a 409-residue protein sequence, read N- to C-terminus: uncharacterized protein (409 aa).

10 helical membrane-spanning segments follow: residues 53–73 (IITL…YVHC), 83–103 (WCYF…NVDG), 115–135 (LGEL…AIVM), 141–161 (IGPY…YLAH), 183–203 (VLFM…WTYG), 205–225 (STTV…VTCL), 243–263 (CLLQ…WASV), 265–285 (NLIT…FGYI), 299–319 (CSLF…SILA), and 329–349 (TVAL…FSYF). The segment covering 388-401 (EEGSSSIGNSTDDI) has biased composition (polar residues). The segment at 388–409 (EEGSSSIGNSTDDINPSEIEEI) is disordered.

Belongs to the CDP-alcohol phosphatidyltransferase class-I family.

The protein localises to the membrane. This is an uncharacterized protein from Dictyostelium discoideum (Social amoeba).